A 1090-amino-acid chain; its full sequence is Protein CHROMATIN REMODELING 24 (1090 aa).

Disordered regions lie at residues 1 to 51 (MAEN…MIKL) and 247 to 273 (VGKQNSYSGRHFDDNSEDNRQGYNLDR). The Nuclear localization signal motif lies at 44–51 (TKKSMIKL). Residues 256 to 273 (RHFDDNSEDNRQGYNLDR) show a composition bias toward basic and acidic residues. In terms of domain architecture, Helicase ATP-binding spans 389-564 (WSLHTQGKGG…WALFNFSCPG (176 aa)). 402 to 409 (DDMGLGKT) contributes to the ATP binding site. The DEAH box motif lies at 515 to 518 (DEGH). Residues 736 to 895 (FIMSLLENLI…IRYFSQQDLR (160 aa)) enclose the Helicase C-terminal domain. Residues 1043-1069 (DGGAKIQKQIAELTRELKDMKAAERIN) are a coiled coil.

Belongs to the SNF2/RAD54 helicase family.

The protein resides in the nucleus. In terms of biological role, DNA helicase that acts as an essential component of the spindle assembly checkpoint. Probable chromatin remodeling factor that regulate homologous recombination (HR) and non-homologous recombination (NHR). This is Protein CHROMATIN REMODELING 24 from Arabidopsis thaliana (Mouse-ear cress).